Here is a 498-residue protein sequence, read N- to C-terminus: Glutamate--tRNA ligase (498 aa).

The 'HIGH' region motif lies at 11 to 21 (PSPTGHLHIGN). Residues 260 to 264 (KLSKR) carry the 'KMSKS' region motif. ATP is bound at residue Lys263.

Belongs to the class-I aminoacyl-tRNA synthetase family. Glutamate--tRNA ligase type 1 subfamily. In terms of assembly, monomer.

The protein localises to the cytoplasm. It catalyses the reaction tRNA(Glu) + L-glutamate + ATP = L-glutamyl-tRNA(Glu) + AMP + diphosphate. Its function is as follows. Catalyzes the attachment of glutamate to tRNA(Glu) in a two-step reaction: glutamate is first activated by ATP to form Glu-AMP and then transferred to the acceptor end of tRNA(Glu). This chain is Glutamate--tRNA ligase, found in Leuconostoc citreum (strain KM20).